The primary structure comprises 170 residues: Adenine phosphoribosyltransferase (170 aa).

The protein belongs to the purine/pyrimidine phosphoribosyltransferase family. Homodimer.

The protein localises to the cytoplasm. The enzyme catalyses AMP + diphosphate = 5-phospho-alpha-D-ribose 1-diphosphate + adenine. It functions in the pathway purine metabolism; AMP biosynthesis via salvage pathway; AMP from adenine: step 1/1. Its function is as follows. Catalyzes a salvage reaction resulting in the formation of AMP, that is energically less costly than de novo synthesis. This chain is Adenine phosphoribosyltransferase, found in Nitrosopumilus maritimus (strain SCM1).